The primary structure comprises 148 residues: Lysozyme-like protein 6 (148 aa).

The N-terminal stretch at 1-19 (MLKALFICVASCLLVVNDG) is a signal peptide. The 129-residue stretch at 20-148 (NIIHRCSLAK…SYWMTGCHLG (129 aa)) folds into the C-type lysozyme domain. Intrachain disulfides connect C25–C145, C49–C133, C83–C98, and C94–C112. E54 is an active-site residue. The N-linked (GlcNAc...) asparagine glycan is linked to N58. D71 is a catalytic residue.

This sequence belongs to the glycosyl hydrolase 22 family. As to quaternary structure, monomer. Expressed strongly in testis and epididymis and weakly in seminal vesicle, vas deferens, kidney and spleen. Highly expressed in primary spermatocytes and round spermatids (at protein level).

It localises to the secreted. It is found in the cell surface. The protein localises to the cell projection. The protein resides in the cilium. Its subcellular location is the flagellum. The catalysed reaction is Hydrolysis of (1-&gt;4)-beta-linkages between N-acetylmuramic acid and N-acetyl-D-glucosamine residues in a peptidoglycan and between N-acetyl-D-glucosamine residues in chitodextrins.. May be involved sperm-egg plasma membrane adhesion and fusion during fertilization. Exhibits bacteriolytic activity in vitro against Micrococcus luteus and Staphylococcus aureus. Shows weak bacteriolytic activity against Gram-positive bacteria at physiological pH. Bacteriolytic activity is pH-dependent, with a maximum at around pH 5.6. The polypeptide is Lysozyme-like protein 6 (Lyzl6) (Mus musculus (Mouse)).